Here is a 73-residue protein sequence, read N- to C-terminus: MSYQQQQCKQPCQPPPVCPTPKCPEPCPPPKCPEPYLPPPCPPEHCPPPPCQDKCPPVQPYPPCQQKYPPKSK.

Residues Met-1–Pro-11 are compositionally biased toward low complexity. Residues Met-1–Thr-20 are disordered. 3 repeat units span residues Pro-21 to Pro-29, Pro-30 to Pro-38, and Pro-39 to Pro-47. Residues Pro-21–Pro-47 form a 3 X 9 AA approximate tandem repeats region.

Belongs to the cornifin (SPRR) family.

The protein resides in the cytoplasm. Its function is as follows. Cross-linked envelope protein of keratinocytes. It is a keratinocyte protein that first appears in the cell cytosol, but ultimately becomes cross-linked to membrane proteins by transglutaminase. All that results in the formation of an insoluble envelope beneath the plasma membrane. This is Small proline-rich protein 2G (SPRR2G) from Homo sapiens (Human).